Here is a 707-residue protein sequence, read N- to C-terminus: Prolyl endopeptidase-like (707 aa).

Catalysis depends on charge relay system residues serine 538, aspartate 624, and histidine 670.

Belongs to the peptidase S9A family. As to quaternary structure, homodimer.

It localises to the cytoplasm. The protein localises to the cytosol. Its function is as follows. Serine peptidase whose precise substrate specificity remains unclear. Does not cleave peptides after a arginine or lysine residue. Regulates trans-Golgi network morphology and sorting by regulating the membrane binding of the AP-1 complex. May play a role in the regulation of synaptic vesicle exocytosis. In Xenopus laevis (African clawed frog), this protein is Prolyl endopeptidase-like (prepl).